The chain runs to 1894 residues: Plexin-A2 (1894 aa).

The signal sequence occupies residues 1 to 34 (MEQRRFYLRAMQADNLSVVLLSVAWLLLARGTTG). 2 N-linked (GlcNAc...) asparagine glycosylation sites follow: N15 and N76. The Sema domain maps to 35 to 508 (MPQYSTFHSE…SERQVTRVPV (474 aa)). Residues 35-1237 (MPQYSTFHSE…VISDSLLTLP (1203 aa)) are Extracellular-facing. Intrachain disulfides connect C94–C103 and C129–C137. N163 and N327 each carry an N-linked (GlcNAc...) asparagine glycan. Disulfide bonds link C284/C405, C300/C356, C374/C393, C511/C528, C517/C559, C520/C537, C531/C543, and C594/C613. N-linked (GlcNAc...) asparagine glycans are attached at residues N598, N696, and N756. IPT/TIG domains lie at 858–951 (PQIT…QYTF), 954–1037 (PSVL…QFEY), 1041–1139 (PRVQ…KFIY), and 1143–1228 (PTFE…SVSV). N-linked (GlcNAc...) asparagine glycosylation is found at N1180 and N1205. Residues 1238 to 1258 (AIISIAAGGSLLLIIVIIVLI) traverse the membrane as a helical segment. At 1259–1894 (AYKRKSREND…HLINAMSIES (636 aa)) the chain is on the cytoplasmic side. The stretch at 1261 to 1310 (KRKSRENDLTLKRLQMQMDNLESRVALECKEAFAELQTDINELTSDLDRS) forms a coiled coil. Residue S1612 is modified to Phosphoserine.

The protein belongs to the plexin family. As to quaternary structure, homodimer. Interacts with RND1. Interacts directly with NRP1 and NRP2. The PLXNA2 homodimer interacts with a SEMA6A homodimer, giving rise to a heterotetramer.

It is found in the cell membrane. In terms of biological role, coreceptor for SEMA3A and SEMA6A. Necessary for signaling by SEMA6A and class 3 semaphorins and subsequent remodeling of the cytoskeleton. Plays a role in axon guidance, invasive growth and cell migration. Class 3 semaphorins bind to a complex composed of a neuropilin and a plexin. The plexin modulates the affinity of the complex for specific semaphorins, and its cytoplasmic domain is required for the activation of down-stream signaling events in the cytoplasm. The chain is Plexin-A2 (Plxna2) from Mus musculus (Mouse).